Here is a 332-residue protein sequence, read N- to C-terminus: Galactosylgalactosylxylosylprotein 3-beta-glucuronosyltransferase 1 (332 aa).

At 1–6 (MPKRRD) the chain is on the cytoplasmic side. An essential for transport from endoplasmic reticulum to Golgi apparatus and interaction with SAR1A region spans residues 3-5 (KRR). The helical; Signal-anchor for type II membrane protein transmembrane segment at 7–27 (ILAIVLIVLPWTLLITVWHQS) threads the bilayer. Residues 28 to 332 (TLAPLLAVHK…KGFTDPSVEI (305 aa)) lie on the Lumenal side of the membrane. Residue 91-93 (PTY) coordinates UDP-alpha-D-glucuronate. 2 positions are modified to phosphothreonine: Thr-103 and Thr-108. Asp-122 lines the UDP-alpha-D-glucuronate pocket. Asn-140 carries N-linked (GlcNAc...) asparagine glycosylation. Residues Arg-165 and Arg-170 each coordinate UDP-alpha-D-glucuronate. The N-linked (GlcNAc...) asparagine glycan is linked to Asn-184. Residue 195 to 197 (DDD) participates in UDP-alpha-D-glucuronate binding. Mn(2+) is bound at residue Asp-197. The interval 243 to 252 (FDPHRPFAID) is interaction with galactose moiety of substrate glycoprotein. The Proton donor/acceptor role is filled by Glu-282. An N-linked (GlcNAc...) asparagine glycan is attached at Asn-301. UDP-alpha-D-glucuronate is bound at residue 309-311 (HTR).

This sequence belongs to the glycosyltransferase 43 family. As to quaternary structure, homodimer. Interacts with SAR1A. Mn(2+) is required as a cofactor. In terms of processing, the soluble form derives from the membrane form by proteolytic processing.

It is found in the golgi apparatus membrane. It localises to the secreted. It catalyses the reaction 3-O-(beta-D-galactosyl-(1-&gt;3)-beta-D-galactosyl-(1-&gt;4)-beta-D-xylosyl)-L-seryl-[protein] + UDP-alpha-D-glucuronate = 3-O-(beta-D-GlcA-(1-&gt;3)-beta-D-Gal-(1-&gt;3)-beta-D-Gal-(1-&gt;4)-beta-D-Xyl)-L-seryl-[protein] + UDP + H(+). Its pathway is protein modification; protein glycosylation. In terms of biological role, involved in the biosynthesis of L2/HNK-1 carbohydrate epitope on glycoproteins. Can also play a role in glycosaminoglycan biosynthesis. Substrates include asialo-orosomucoid (ASOR), asialo-fetuin, and asialo-neural cell adhesion molecule. Requires sphingomyelin for activity: stearoyl-sphingomyelin was the most effective, followed by palmitoyl-sphingomyelin and lignoceroyl-sphingomyelin. Activity was demonstrated only for sphingomyelin with a saturated fatty acid and not for that with an unsaturated fatty acid, regardless of the length of the acyl group. This is Galactosylgalactosylxylosylprotein 3-beta-glucuronosyltransferase 1 from Pan troglodytes (Chimpanzee).